A 249-amino-acid polypeptide reads, in one-letter code: 5'-nucleotidase SurE (249 aa).

A divalent metal cation is bound by residues D8, D9, S39, and N91.

It belongs to the SurE nucleotidase family. A divalent metal cation serves as cofactor.

Its subcellular location is the cytoplasm. It catalyses the reaction a ribonucleoside 5'-phosphate + H2O = a ribonucleoside + phosphate. Nucleotidase that shows phosphatase activity on nucleoside 5'-monophosphates. This is 5'-nucleotidase SurE from Pseudomonas paraeruginosa (strain DSM 24068 / PA7) (Pseudomonas aeruginosa (strain PA7)).